Here is a 98-residue protein sequence, read N- to C-terminus: Integration host factor subunit alpha (98 aa).

The segment at 49–72 is disordered; sequence FGNFDLRDKNQRPGRNPKTGEDIP.

Belongs to the bacterial histone-like protein family. In terms of assembly, heterodimer of an alpha and a beta chain.

Its function is as follows. This protein is one of the two subunits of integration host factor, a specific DNA-binding protein that functions in genetic recombination as well as in transcriptional and translational control. The polypeptide is Integration host factor subunit alpha (Shewanella loihica (strain ATCC BAA-1088 / PV-4)).